The sequence spans 596 residues: Elongation factor 4 (596 aa).

The tr-type G domain maps to K2–K183. Residues D14–T19 and N130–D133 contribute to the GTP site.

The protein belongs to the TRAFAC class translation factor GTPase superfamily. Classic translation factor GTPase family. LepA subfamily.

The protein localises to the cell inner membrane. It carries out the reaction GTP + H2O = GDP + phosphate + H(+). Its function is as follows. Required for accurate and efficient protein synthesis under certain stress conditions. May act as a fidelity factor of the translation reaction, by catalyzing a one-codon backward translocation of tRNAs on improperly translocated ribosomes. Back-translocation proceeds from a post-translocation (POST) complex to a pre-translocation (PRE) complex, thus giving elongation factor G a second chance to translocate the tRNAs correctly. Binds to ribosomes in a GTP-dependent manner. The polypeptide is Elongation factor 4 (Campylobacter lari (strain RM2100 / D67 / ATCC BAA-1060)).